The chain runs to 510 residues: Glycogen synthase (510 aa).

ADP-alpha-D-glucose is bound at residue K18.

It belongs to the glycosyltransferase 1 family. Bacterial/plant glycogen synthase subfamily.

It catalyses the reaction [(1-&gt;4)-alpha-D-glucosyl](n) + ADP-alpha-D-glucose = [(1-&gt;4)-alpha-D-glucosyl](n+1) + ADP + H(+). It participates in glycan biosynthesis; glycogen biosynthesis. Its function is as follows. Synthesizes alpha-1,4-glucan chains using ADP-glucose. The sequence is that of Glycogen synthase from Bordetella parapertussis (strain 12822 / ATCC BAA-587 / NCTC 13253).